Reading from the N-terminus, the 270-residue chain is Flavin-dependent thymidylate synthase (270 aa).

The ThyX domain occupies 13-218 (GFVRLVDQMG…PLAWAAFEEH (206 aa)). Residues S59, 82–84 (RHR), and E90 contribute to the FAD site. DUMP-binding positions include 79–82 (QWFR), 90–94 (EISGR), and R157. Residues 82–92 (RHRTASVNEIS) carry the ThyX motif motif. FAD contacts are provided by residues 173 to 175 (DLH) and H179. R184 contributes to the dUMP binding site. The Involved in ionization of N3 of dUMP, leading to its activation role is filled by R184.

This sequence belongs to the thymidylate synthase ThyX family. In terms of assembly, homotetramer. FAD is required as a cofactor.

The enzyme catalyses dUMP + (6R)-5,10-methylene-5,6,7,8-tetrahydrofolate + NADPH + H(+) = dTMP + (6S)-5,6,7,8-tetrahydrofolate + NADP(+). The protein operates within pyrimidine metabolism; dTTP biosynthesis. Catalyzes the reductive methylation of 2'-deoxyuridine-5'-monophosphate (dUMP) to 2'-deoxythymidine-5'-monophosphate (dTMP) while utilizing 5,10-methylenetetrahydrofolate (mTHF) as the methyl donor, and NADPH and FADH(2) as the reductant. The chain is Flavin-dependent thymidylate synthase from Thermus thermophilus (strain ATCC 27634 / DSM 579 / HB8).